The following is a 1714-amino-acid chain: uncharacterized protein (1714 aa).

2 disordered regions span residues serine 47–leucine 70 and lysine 584–lysine 616. ATP-binding positions include alanine 607–serine 614 and alanine 806–threonine 813. The span at alanine 607–lysine 616 shows a compositional bias: basic and acidic residues. A Helicase ATP-binding domain is found at leucine 793–serine 963. Positions aspartate 913–histidine 916 match the DEVH box motif. Residues lysine 1197–glutamate 1223 form a disordered region. A compositionally biased stretch (basic and acidic residues) spans lysine 1199–glutamate 1218. Positions alanine 1237–leucine 1391 constitute a Helicase C-terminal domain.

It belongs to the helicase family. SKI2 subfamily.

It localises to the nucleus. This is an uncharacterized protein from Caenorhabditis elegans.